The sequence spans 454 residues: Chromosomal replication initiator protein DnaA (454 aa).

The interval 1 to 76 (MNKLKTDLNL…IGASFRILAK (76 aa)) is domain I, interacts with DnaA modulators. The domain II stretch occupies residues 76–113 (KNPKIIFAQESPGNGEKATGKKIKSLPREDKSSIFESK). The interval 114 to 330 (GLNTKFSFEN…GALNRLCAYA (217 aa)) is domain III, AAA+ region. 4 residues coordinate ATP: Gly158, Gly160, Lys161, and Thr162. Positions 331-454 (SIHKEGKITL…KITEQLTSSQ (124 aa)) are domain IV, binds dsDNA.

The protein belongs to the DnaA family. In terms of assembly, oligomerizes as a right-handed, spiral filament on DNA at oriC.

The protein localises to the cytoplasm. In terms of biological role, plays an essential role in the initiation and regulation of chromosomal replication. ATP-DnaA binds to the origin of replication (oriC) to initiate formation of the DNA replication initiation complex once per cell cycle. Binds the DnaA box (a 9 base pair repeat at the origin) and separates the double-stranded (ds)DNA. Forms a right-handed helical filament on oriC DNA; dsDNA binds to the exterior of the filament while single-stranded (ss)DNA is stabiized in the filament's interior. The ATP-DnaA-oriC complex binds and stabilizes one strand of the AT-rich DNA unwinding element (DUE), permitting loading of DNA polymerase. After initiation quickly degrades to an ADP-DnaA complex that is not apt for DNA replication. Binds acidic phospholipids. The chain is Chromosomal replication initiator protein DnaA from Methylacidiphilum infernorum (isolate V4) (Methylokorus infernorum (strain V4)).